Consider the following 202-residue polypeptide: Small ribosomal subunit protein uS4c (202 aa).

The S4 RNA-binding domain maps to 90 to 154; the sequence is MRLDNILFRL…SQSIITKNLN (65 aa).

It belongs to the universal ribosomal protein uS4 family. As to quaternary structure, part of the 30S ribosomal subunit. Contacts protein S5. The interaction surface between S4 and S5 is involved in control of translational fidelity.

It is found in the plastid. The protein resides in the chloroplast. One of the primary rRNA binding proteins, it binds directly to 16S rRNA where it nucleates assembly of the body of the 30S subunit. In terms of biological role, with S5 and S12 plays an important role in translational accuracy. This is Small ribosomal subunit protein uS4c (rps4) from Monoclea forsteri (Liverwort).